Reading from the N-terminus, the 325-residue chain is Acetyl-coenzyme A carboxylase carboxyl transferase subunit alpha (325 aa).

Residues 38 to 292 form the CoA carboxyltransferase C-terminal domain; sequence KLEKRLHALE…DQVLEKSLKQ (255 aa).

It belongs to the AccA family. In terms of assembly, acetyl-CoA carboxylase is a heterohexamer composed of biotin carboxyl carrier protein (AccB), biotin carboxylase (AccC) and two subunits each of ACCase subunit alpha (AccA) and ACCase subunit beta (AccD).

The protein resides in the cytoplasm. The catalysed reaction is N(6)-carboxybiotinyl-L-lysyl-[protein] + acetyl-CoA = N(6)-biotinyl-L-lysyl-[protein] + malonyl-CoA. It functions in the pathway lipid metabolism; malonyl-CoA biosynthesis; malonyl-CoA from acetyl-CoA: step 1/1. Functionally, component of the acetyl coenzyme A carboxylase (ACC) complex. First, biotin carboxylase catalyzes the carboxylation of biotin on its carrier protein (BCCP) and then the CO(2) group is transferred by the carboxyltransferase to acetyl-CoA to form malonyl-CoA. This is Acetyl-coenzyme A carboxylase carboxyl transferase subunit alpha from Halalkalibacterium halodurans (strain ATCC BAA-125 / DSM 18197 / FERM 7344 / JCM 9153 / C-125) (Bacillus halodurans).